The primary structure comprises 475 residues: FAD-dependent monooxygenase janM (475 aa).

Residues 8–24 (VIIVGGSIGGLTLAHCL) traverse the membrane as a helical segment. FAD contacts are provided by Glu35, Gly49, and Arg108. Asn147 is a glycosylation site (N-linked (GlcNAc...) asparagine). Asp299 and Ala312 together coordinate FAD. The helical transmembrane segment at 432–451 (GWRFHAMLCILMLAILYTWV) threads the bilayer.

It belongs to the paxM FAD-dependent monooxygenase family. Requires FAD as cofactor.

It is found in the membrane. It functions in the pathway secondary metabolite biosynthesis. In terms of biological role, FAD-dependent monooxygenase; part of the gene cluster that mediates the biosynthesis of the indole diterpenes janthitremanes such as shearinine K or shearinine A. The geranylgeranyl diphosphate (GGPP) synthase janG catalyzes the first step in janthitremane biosynthesis via conversion of farnesyl pyrophosphate and isopentyl pyrophosphate into geranylgeranyl pyrophosphate (GGPP). Condensation of indole-3-glycerol phosphate with GGPP by the prenyl transferase janC then forms 3-geranylgeranylindole (3-GGI). Epoxidation by the FAD-dependent monooxygenase janM leads to a epoxidized-GGI that is substrate of the terpene cyclase janB for cyclization to yield paspaline. Paspaline is subsequently converted to 13-desoxypaspaline by the cytochrome P450 monooxygenase janP, via beta-PC-M6 in a series of alpha-face oxidations. The cytochrome P450 monooxygenase janQ is proposed to carry out sequential beta-face oxidation steps at C-7 and C-13 of 13-desoxypaspaline to form paspalicine and paspalinine respectively. The indole diterpene prenyltransferase janD may then convert paspalinine into shearinine K which is substrate of janO and/or additional enzymes for oxidation and cyclization to generate shearinine A. The polypeptide is FAD-dependent monooxygenase janM (Penicillium janthinellum (Penicillium vitale)).